The primary structure comprises 96 residues: DNA-directed RNA polymerase subunit Rpo11 (96 aa).

Belongs to the archaeal Rpo11/eukaryotic RPB11/RPC19 RNA polymerase subunit family. In terms of assembly, part of the RNA polymerase complex.

Its subcellular location is the cytoplasm. The catalysed reaction is RNA(n) + a ribonucleoside 5'-triphosphate = RNA(n+1) + diphosphate. DNA-dependent RNA polymerase (RNAP) catalyzes the transcription of DNA into RNA using the four ribonucleoside triphosphates as substrates. The polypeptide is DNA-directed RNA polymerase subunit Rpo11 (Methanococcus maripaludis (strain DSM 14266 / JCM 13030 / NBRC 101832 / S2 / LL)).